The chain runs to 2281 residues: Protein Ycf2 (2281 aa).

1634-1641 (GSIGTGRS) is a binding site for ATP.

It belongs to the Ycf2 family.

Its subcellular location is the plastid. The protein localises to the chloroplast stroma. In terms of biological role, probable ATPase of unknown function. Its presence in a non-photosynthetic plant (Epifagus virginiana) and experiments in tobacco indicate that it has an essential function which is probably not related to photosynthesis. The sequence is that of Protein Ycf2 from Buxus microphylla (Littleleaf boxwood).